A 228-amino-acid chain; its full sequence is Thymidylate kinase (228 aa).

Polar residues predominate over residues 1–10 (MSDSAVQRSS). Positions 1-23 (MSDSAVQRSSGRGRFITFEGGEG) are disordered. 20-27 (GGEGTGKS) lines the ATP pocket.

The protein belongs to the thymidylate kinase family.

It carries out the reaction dTMP + ATP = dTDP + ADP. Functionally, phosphorylation of dTMP to form dTDP in both de novo and salvage pathways of dTTP synthesis. This is Thymidylate kinase from Bradyrhizobium diazoefficiens (strain JCM 10833 / BCRC 13528 / IAM 13628 / NBRC 14792 / USDA 110).